The sequence spans 473 residues: MKILYSLRRFYHVETLFNGTFVLAGRDQETTGFAWWAGNARLINLSGKLLGAHVAHAGLIVFWAGAMNLFEVAHFVPEKPMYEQGLILLPHLATLGWGVGPGGEVLDTFPYFVSGVLHLISSAVLGFGGIYHALLGPETLEESFPFFGYVWKDRNKMTTILGIHLILLGLGAFLLVLKALYFGGVYDTWAPGGGDVRKITNLTLSPGVIFGYLLKSPFGGEGWIVSVDDLEDIIGGHVWLGSICVLGGIWHILTKPFAWARRAFVWSGEAYLSYSLAALSVFGFIACCFVWFNNTAYPSEFYGPTGPEASQAQAFTFLVRDQRLGANVGSAQGPTGLGKYLMRSPTGEVIFGGETMRFWDLRAPWLEPLRGPNGLDLSRLKKDIQPWQERRSAEYMTHAPLGSLNSVGGVATEINAVNYVSPRSWLATSHFVLGFFFFVGHLWHAGRARAAAAGFEKGIDRDLEPVLYMTPLN.

The propeptide occupies 1–14 (MKILYSLRRFYHVE). N-acetylthreonine is present on T15. The residue at position 15 (T15) is a Phosphothreonine. The next 5 membrane-spanning stretches (helical) occupy residues 69-93 (LFEVAHFVPEKPMYEQGLILLPHLA), 134-155 (LLGPETLEESFPFFGYVWKDRN), 178-200 (KALYFGGVYDTWAPGGGDVRKIT), 255-275 (KPFAWARRAFVWSGEAYLSYS), and 291-312 (WFNNTAYPSEFYGPTGPEASQA). E367 contributes to the [CaMn4O5] cluster binding site. A helical transmembrane segment spans residues 447–471 (RARAAAAGFEKGIDRDLEPVLYMTP).

Belongs to the PsbB/PsbC family. PsbC subfamily. As to quaternary structure, PSII is composed of 1 copy each of membrane proteins PsbA, PsbB, PsbC, PsbD, PsbE, PsbF, PsbH, PsbI, PsbJ, PsbK, PsbL, PsbM, PsbT, PsbX, PsbY, PsbZ, Psb30/Ycf12, at least 3 peripheral proteins of the oxygen-evolving complex and a large number of cofactors. It forms dimeric complexes. The cofactor is Binds multiple chlorophylls and provides some of the ligands for the Ca-4Mn-5O cluster of the oxygen-evolving complex. It may also provide a ligand for a Cl- that is required for oxygen evolution. PSII binds additional chlorophylls, carotenoids and specific lipids..

The protein localises to the plastid. The protein resides in the chloroplast thylakoid membrane. In terms of biological role, one of the components of the core complex of photosystem II (PSII). It binds chlorophyll and helps catalyze the primary light-induced photochemical processes of PSII. PSII is a light-driven water:plastoquinone oxidoreductase, using light energy to abstract electrons from H(2)O, generating O(2) and a proton gradient subsequently used for ATP formation. The protein is Photosystem II CP43 reaction center protein of Saccharum hybrid (Sugarcane).